A 159-amino-acid chain; its full sequence is Disulfide bond formation protein B (159 aa).

Topologically, residues 1–8 (MQANSRAF) are cytoplasmic. A helical membrane pass occupies residues 9–25 (FLLIAVIAFGLVGYALY). Residues 26–43 (LQHVEGLQPCPLCVLQRF) lie on the Periplasmic side of the membrane. The cysteines at positions 35 and 38 are disulfide-linked. A helical transmembrane segment spans residues 44–57 (AFVGIGVFSLLAAL). Over 58–63 (SSATRL) the chain is Cytoplasmic. The chain crosses the membrane as a helical span at residues 64–81 (LWHGLGMLSGLGGIFVAG). Residues 82–136 (YHVSLLLNPKASCGIDPIENWVNALPTAKWLPQVFESDGLCTAPLPPVLGVSIPL) lie on the Periplasmic side of the membrane. An intrachain disulfide couples Cys94 to Cys122. The chain crosses the membrane as a helical span at residues 137–155 (WSLIWMVILALTLVVAMIR). Residues 156 to 159 (RERR) lie on the Cytoplasmic side of the membrane.

It belongs to the DsbB family.

The protein resides in the cell inner membrane. Required for disulfide bond formation in some periplasmic proteins. Acts by oxidizing the DsbA protein. This Ralstonia nicotianae (strain ATCC BAA-1114 / GMI1000) (Ralstonia solanacearum) protein is Disulfide bond formation protein B.